The sequence spans 337 residues: Arylacetonitrilase (337 aa).

One can recognise a CN hydrolase domain in the interval 7 to 278 (VRVAVTQHEP…EGFVYADLDL (272 aa)). Glutamate 47 acts as the Proton acceptor in catalysis. Residue lysine 127 is part of the active site. Catalysis depends on cysteine 162, which acts as the Nucleophile. Positions 311-337 (QHRPEGQADNAAYGLDVPSGLVEEEGA) are disordered.

It belongs to the carbon-nitrogen hydrolase superfamily. Nitrilase family.

It carries out the reaction a nitrile + 2 H2O = a carboxylate + NH4(+). It catalyses the reaction 4-chlorophenylacetonitrile + 2 H2O = 4-chlorophenylacetate + NH4(+). Functionally, nitrilase that hydrolyzes preferentially phenylacetonitrile, but also (R,S)-mandelonitrile, and 2-phenylpropionitrile. This Aspergillus niger (strain ATCC MYA-4892 / CBS 513.88 / FGSC A1513) protein is Arylacetonitrilase.